Here is a 170-residue protein sequence, read N- to C-terminus: Adenine phosphoribosyltransferase (170 aa).

The protein belongs to the purine/pyrimidine phosphoribosyltransferase family. As to quaternary structure, homodimer.

The protein resides in the cytoplasm. It carries out the reaction AMP + diphosphate = 5-phospho-alpha-D-ribose 1-diphosphate + adenine. Its pathway is purine metabolism; AMP biosynthesis via salvage pathway; AMP from adenine: step 1/1. Functionally, catalyzes a salvage reaction resulting in the formation of AMP, that is energically less costly than de novo synthesis. This chain is Adenine phosphoribosyltransferase, found in Cenarchaeum symbiosum (strain A).